The following is a 773-amino-acid chain: MAASQGGGGNSGGGGCSGGGSGGGGGAAGGGGGGGGGGGGGAGAGGGGGCGGTVAVPIPVPTLFGQPFPNGPQWHPGSLQPQHTVRSLDRALEEAGNSGILSLSGRKLREFPGSGYDLTDTTQADLSRNRFTEIPSDVWLFAPLETLNLYHNCIKTIPEAIKNLQMLTYLNISRNLLSTLPKYLFDLPLKVLVVSNNKLVSIPEEIGKLKDLMELDVSCNEIQVLPQQMGKLHSLKELNIRRNNLHVLPDELGDLPLVKLDFSCNKVTEIPVCYRKLHHLQVIILDNNPLQVPPAQICLKGKVHIFKYLNIQACCRMDKKPDSLDLPSLNKRMPSQPLTDSMEDFYPNKNHGPDSGIGSDNGEKRLSTTEPSDDDTISLHSQVSESNREQTSRNDSHITGSKPDSQKDQEVYDFIDPNTEDVAVPEEGDTHIGSFVSFLKGKEKSSEKSQKNEEPPNEKKVDKEQLLPEEEDDDLKEVTDLRKIAAQLLKQEQKNRILNHSTSVMRNKLKQTVECEKSVPADEGNSPLSPLAWQPLENQKDQIVDQQWPESQPIIWQNEERRRSKQIRKEYFKYKSTRKNSSGNENEEQESDNAHMSAQSPVSSEEYDRSDGFSHGPFGLKPRSAFSRASRQEYGAADPGFTMRRKMEHLREEREQIRQLRNNLESRLKVILPDDIGAALMDGVVLCHLANHIRPRSVASIHVPSPAVPKLSMAKCRRNVENFLDACKKLGVSQERLCLPHHILEERGLVKVGVTVQALLELPTTKASQLSMA.

The interval 1-46 (MAASQGGGGNSGGGGCSGGGSGGGGGAAGGGGGGGGGGGGGAGAGG) is disordered. 9 LRR repeats span residues 97–118 (NSGILSLSGRKLREFPGSGYDL), 120–141 (DTTQADLSRNRFTEIPSDVWLF), 143–164 (PLETLNLYHNCIKTIPEAIKNL), 166–187 (MLTYLNISRNLLSTLPKYLFDL), 188–209 (PLKVLVVSNNKLVSIPEEIGKL), 211–232 (DLMELDVSCNEIQVLPQQMGKL), 234–256 (SLKELNIRRNNLHVLPDELGDLP), 257–277 (LVKLDFSCNKVTEIPVCYRKL), and 279–300 (HLQVIILDNNPLQVPPAQICLK). Disordered regions lie at residues 324 to 409 (LDLP…QKDQ), 438 to 478 (FLKG…LKEV), and 573 to 633 (KYKS…SRQE). Composition is skewed to basic and acidic residues over residues 386–396 (SNREQTSRNDS) and 440–466 (KGKEKSSEKSQKNEEPPNEKKVDKEQL). The segment covering 594 to 603 (AHMSAQSPVS) has biased composition (polar residues). Residues 650–763 (LREEREQIRQ…VTVQALLELP (114 aa)) enclose the Calponin-homology (CH) domain.

Its function is as follows. May play a role in the organization of the cytoskeleton. The protein is Leucine-rich repeat and calponin homology domain-containing protein 2 (Lrch2) of Mus musculus (Mouse).